The following is a 415-amino-acid chain: Gamma-glutamyl phosphate reductase (415 aa).

Belongs to the gamma-glutamyl phosphate reductase family.

Its subcellular location is the cytoplasm. It carries out the reaction L-glutamate 5-semialdehyde + phosphate + NADP(+) = L-glutamyl 5-phosphate + NADPH + H(+). Its pathway is amino-acid biosynthesis; L-proline biosynthesis; L-glutamate 5-semialdehyde from L-glutamate: step 2/2. Functionally, catalyzes the NADPH-dependent reduction of L-glutamate 5-phosphate into L-glutamate 5-semialdehyde and phosphate. The product spontaneously undergoes cyclization to form 1-pyrroline-5-carboxylate. The protein is Gamma-glutamyl phosphate reductase of Clostridium perfringens (strain 13 / Type A).